The primary structure comprises 1772 residues: Helicase SWR1 (1772 aa).

Disordered stretches follow at residues 1 to 170 (MSKR…LTPL) and 282 to 402 (AVEE…PYDV). Over residues 7 to 19 (DLATTHANGSVDS) the composition is skewed to polar residues. Low complexity predominate over residues 61–71 (RQATQQQQAPG). The segment covering 107–121 (TPKKTPSRRNGRRRS) has biased composition (basic residues). Composition is skewed to acidic residues over residues 126-163 (EVEE…EEAE) and 282-323 (AVEE…QEEE). Positions 338–379 (AKGKSKTASKTSKSKSKASSKSKSKSKGKGQARASKLSKSRR) are enriched in basic residues. The 74-residue stretch at 536-609 (GFNDPERSTR…AKLLKTMARK (74 aa)) folds into the HSA domain. Positions 656-854 (LEARVRGDND…EKADTEVDRK (199 aa)) are disordered. 4 stretches are compositionally biased toward acidic residues: residues 665 to 695 (DTPE…DDRE), 727 to 757 (AEEE…EETE), 770 to 800 (PAEE…DYEA), and 818 to 847 (EEDE…EEKA). The Helicase ATP-binding domain occupies 921-1086 (AGLYNNDTNG…WSLLYFLMPS (166 aa)). 934–941 (DEMGLGKT) contacts ATP. The DEAH box signature appears at 1037 to 1040 (DEAH). Residues 1470 to 1623 (KLQRLATLLQ…NVVIQDGEFT (154 aa)) enclose the Helicase C-terminal domain. A disordered region spans residues 1681–1757 (TNLDVEDFDE…SDESDSGIGH (77 aa)). A compositionally biased stretch (acidic residues) spans 1740 to 1752 (GGDDDDSDSDESD).

The protein belongs to the SNF2/RAD54 helicase family. SWR1 subfamily. In terms of assembly, component of the SWR1 chromatin-remodeling complex.

The protein resides in the nucleus. It catalyses the reaction ATP + H2O = ADP + phosphate + H(+). Catalytic component of the SWR1 complex which mediates the ATP-dependent exchange of histone H2A for the H2A variant HZT1 leading to transcriptional regulation of selected genes by chromatin remodeling. The chain is Helicase SWR1 (SWR1) from Yarrowia lipolytica (strain CLIB 122 / E 150) (Yeast).